The following is a 249-amino-acid chain: 5'-nucleotidase SurE (249 aa).

4 residues coordinate a divalent metal cation: Asp-8, Asp-9, Ser-39, and Asn-91.

This sequence belongs to the SurE nucleotidase family. Requires a divalent metal cation as cofactor.

The protein resides in the cytoplasm. The enzyme catalyses a ribonucleoside 5'-phosphate + H2O = a ribonucleoside + phosphate. Functionally, nucleotidase that shows phosphatase activity on nucleoside 5'-monophosphates. This chain is 5'-nucleotidase SurE, found in Pseudomonas paraeruginosa (strain DSM 24068 / PA7) (Pseudomonas aeruginosa (strain PA7)).